Consider the following 371-residue polypeptide: MQFKPAVTALVSAVALATLLSGCKKEEAAPAAQAPQVGVVTIQPQAFTLTSELPGRTSAYRVAEVRPQVNGIILKRLFKEGSEVKEGQQLYQIDPAVYEATLANAKANLLATRSLAERYKQLIDEQAVSKQEYDDANAKRLQAEASLKSAQIDLRYTKVLAPISGRIGRSSFTEGALVSNGQTDAMATIQQLDPIYVDVTQSTAELLKLRRDLESGQLQKAGNNAASVQLVLEDGSLFKQEGRLEFSEVAVDETTGSVTLRALFPNPDHTLLPGMFVHARLKAGVNANAILAPQQGVTRDLKGAPTALVVNQENKVELRQLKASRTLGSDWLIEEGLNPGDRLITEGLQYVSPRRRGEGQRCHQRQEAGRP.

The signal sequence occupies residues 1-22; sequence MQFKPAVTALVSAVALATLLSG. Cysteine 23 carries the N-palmitoyl cysteine lipid modification. A lipid anchor (S-diacylglycerol cysteine) is attached at cysteine 23. A coiled-coil region spans residues 115 to 155; it reads LAERYKQLIDEQAVSKQEYDDANAKRLQAEASLKSAQIDLR.

Belongs to the membrane fusion protein (MFP) (TC 8.A.1) family.

The protein localises to the cell inner membrane. The periplasmic linker protein component of an antibiotic efflux pump. Confers resistance to numerous structurally unrelated antibiotics such as carbenicillin, chloramphenicol, erythromycin, novobiocin, streptomycin and tetracycline. Is not involved in organic solvent efflux. In Pseudomonas putida (Arthrobacter siderocapsulatus), this protein is Antibiotic efflux pump periplasmic linker protein ArpA (arpA).